We begin with the raw amino-acid sequence, 199 residues long: dITP/XTP pyrophosphatase (199 aa).

Ser-8–Lys-13 lines the substrate pocket. Asp-69 acts as the Proton acceptor in catalysis. Asp-69 provides a ligand contact to Mg(2+). Residues Ser-70, Phe-154–Asn-157, Lys-177, and His-182–Arg-183 each bind substrate.

It belongs to the HAM1 NTPase family. As to quaternary structure, homodimer. Mg(2+) serves as cofactor.

The catalysed reaction is XTP + H2O = XMP + diphosphate + H(+). It carries out the reaction dITP + H2O = dIMP + diphosphate + H(+). It catalyses the reaction ITP + H2O = IMP + diphosphate + H(+). Its function is as follows. Pyrophosphatase that catalyzes the hydrolysis of nucleoside triphosphates to their monophosphate derivatives, with a high preference for the non-canonical purine nucleotides XTP (xanthosine triphosphate), dITP (deoxyinosine triphosphate) and ITP. Seems to function as a house-cleaning enzyme that removes non-canonical purine nucleotides from the nucleotide pool, thus preventing their incorporation into DNA/RNA and avoiding chromosomal lesions. In Xylella fastidiosa (strain 9a5c), this protein is dITP/XTP pyrophosphatase.